A 59-amino-acid chain; its full sequence is uncharacterized protein (59 aa).

The chain crosses the membrane as a helical span at residues 7 to 24 (FLLVFIILAQLLSCTPSA).

It localises to the membrane. This is an uncharacterized protein from Rickettsia prowazekii (strain Madrid E).